A 450-amino-acid chain; its full sequence is Phosphoglucosamine mutase (450 aa).

Catalysis depends on Ser-101, which acts as the Phosphoserine intermediate. Mg(2+) contacts are provided by Ser-101, Asp-240, Asp-242, and Asp-244. Residue Ser-101 is modified to Phosphoserine.

It belongs to the phosphohexose mutase family. Mg(2+) is required as a cofactor. Activated by phosphorylation. Phosphorylated by StkP in vivo.

It carries out the reaction alpha-D-glucosamine 1-phosphate = D-glucosamine 6-phosphate. Its function is as follows. Catalyzes the conversion of glucosamine-6-phosphate to glucosamine-1-phosphate. In Streptococcus pneumoniae (strain ATCC BAA-255 / R6), this protein is Phosphoglucosamine mutase.